Reading from the N-terminus, the 316-residue chain is Apolipoprotein E (316 aa).

The N-terminal stretch at 1–18 is a signal peptide; the sequence is MKVLWVAVVVALLAGCQA. Tandem repeats lie at residues 79 to 100, 101 to 122, 123 to 144, 145 to 166, 167 to 188, 189 to 210, 211 to 232, and 233 to 254. An 8 X 22 AA approximate tandem repeats region spans residues 79-254; sequence ALMEETMKEV…RLDKIRQQLE (176 aa). Met-142 carries the methionine sulfoxide modification. Position 146 is a phosphoserine; by FAM20C (Ser-146). Positions 157–167 are LDL and other lipoprotein receptors binding; that stretch reads HLRKLRKRLLR. 161–164 is a binding site for heparin; that stretch reads LRKR. Residues 209–289 form a lipid-binding and lipoprotein association region; that stretch reads AATLSTLAGQ…SWFEPLVEDM (81 aa). Thr-211 carries an O-linked (GalNAc...) threonine glycan. 228–235 serves as a coordination point for heparin; sequence RQKLHGRL. A homooligomerization region spans residues 265–316; sequence NQMRLQAEAFQARLRSWFEPLVEDMQRQWAGLVEKVQLALRPSPTSPPSENH. Residues 277-289 form a specificity for association with VLDL region; it reads RLRSWFEPLVEDM.

Belongs to the apolipoprotein A1/A4/E family. Homotetramer. May interact with ABCA1; functionally associated with ABCA1 in the biogenesis of HDLs. May interact with APP/A4 amyloid-beta peptide; the interaction is extremely stable in vitro but its physiological significance is unclear. May interact with MAPT. May interact with MAP2. In the cerebrospinal fluid, interacts with secreted SORL1. Interacts with PMEL; this allows the loading of PMEL luminal fragment on ILVs to induce fibril nucleation. APOE exists as multiple glycosylated and sialylated glycoforms within cells and in plasma. The extent of glycosylation and sialylation are tissue and context specific. In terms of processing, glycated in plasma VLDL. Post-translationally, phosphorylated by FAM20C in the extracellular medium.

It localises to the secreted. It is found in the extracellular space. Its subcellular location is the extracellular matrix. The protein localises to the extracellular vesicle. The protein resides in the endosome. It localises to the multivesicular body. In terms of biological role, APOE is an apolipoprotein, a protein associating with lipid particles, that mainly functions in lipoprotein-mediated lipid transport between organs via the plasma and interstitial fluids. APOE is a core component of plasma lipoproteins and is involved in their production, conversion and clearance. Apolipoproteins are amphipathic molecules that interact both with lipids of the lipoprotein particle core and the aqueous environment of the plasma. As such, APOE associates with chylomicrons, chylomicron remnants, very low density lipoproteins (VLDL) and intermediate density lipoproteins (IDL) but shows a preferential binding to high-density lipoproteins (HDL). It also binds a wide range of cellular receptors including the LDL receptor/LDLR and the very low-density lipoprotein receptor/VLDLR that mediate the cellular uptake of the APOE-containing lipoprotein particles. Finally, APOE also has a heparin-binding activity and binds heparan-sulfate proteoglycans on the surface of cells, a property that supports the capture and the receptor-mediated uptake of APOE-containing lipoproteins by cells. The sequence is that of Apolipoprotein E (APOE) from Bos mutus grunniens (Wild yak).